The following is a 187-amino-acid chain: Cytokinin riboside 5'-monophosphate phosphoribohydrolase (187 aa).

Residues E80, 98–99, 115–121, and T127 each bind substrate; these read RK and GVGTLDE.

The protein belongs to the LOG family.

The enzyme catalyses N(6)-(dimethylallyl)adenosine 5'-phosphate + H2O = N(6)-dimethylallyladenine + D-ribose 5-phosphate. It catalyses the reaction 9-ribosyl-trans-zeatin 5'-phosphate + H2O = trans-zeatin + D-ribose 5-phosphate. Its function is as follows. Catalyzes the hydrolytic removal of ribose 5'-monophosphate from nitrogen N6-modified adenosines, the final step of bioactive cytokinin synthesis. In Mycobacterium marinum (strain ATCC BAA-535 / M), this protein is Cytokinin riboside 5'-monophosphate phosphoribohydrolase.